The primary structure comprises 551 residues: Cytochrome P450 monooxygenase virE (551 aa).

The signal sequence occupies residues M1 to R25. N-linked (GlcNAc...) asparagine glycosylation is present at N392. Position 439 (C439) interacts with heme.

This sequence belongs to the cytochrome P450 family. Requires heme as cofactor.

It functions in the pathway secondary metabolite biosynthesis. Its function is as follows. Cytochrome P450 monooxygenase; part of the gene cluster that mediates the biosynthesis of virensols and trichoxide, fungal natural products that contain or are derived from a salicylaldehyde core. The pathway begins with the synthesis of the reduced chain in virensol C by the highly reducing polyketide synthase virA via condensation of one acetate and 8 malonate units. VirA has interesting programming rules since the first 2 ketides are fully reduced, the 3 following ketides undergo beta-dehydration, and the last 3 ketides are only reduced to beta-hydroxys to yield the trihydroxy portion. The production of aldehyde virensol C by virA alone is surprising, since virA does not contain a reductase (R) domain that is typically associated with reductive product release in HRPKS. The cupin-domain enzyme virC is involved in enhancing virA product turnover. The short-chain dehydrogenase virB then oxidizes the C-7 alcohol of virensol C to a ketone, yielding virensol D. Virensol D is further transformed to salicylaldehyde 5-deoxyaurocitrin by the short-chain dehydrogenase virD. VirD catalyzes the dehydrogenation of C-3 to form the beta-ketone aldehyde, which is followed by the generation of the nucleophilic C-2 that is required for the intramolecular aldol condensation between C-2 and C-7, itself followed by dehydration and aromatization which leads to salicylaldehyde 5-deoxyaurocitrin. While the dehydrogenation of virensol D is definitely catalyzed by virD, the aldol condensation and dehydration may be uncatalyzed or assisted by virD. The short chain dehydrogenase virG then converts salicylaldehyde 5-deoxyaurocitrin into virensol B which is further hydroxylated by the cytochrome P450 monooxygenase virE to yield the hydroquinone virensol A. VirI then may oxidize virensol A to form the quinone, while virH performs the epoxidation. Finally, the two remaining short-chain dehydrogenases, virK and virL, are probably responsible for reducing the ketones to the corresponding alcohols to furnish the epoxycyclohexanol structure in trichoxide. This chain is Cytochrome P450 monooxygenase virE, found in Hypocrea virens (strain Gv29-8 / FGSC 10586) (Gliocladium virens).